The following is a 104-amino-acid chain: ATP-dependent Clp protease adapter protein ClpS (104 aa).

This sequence belongs to the ClpS family. In terms of assembly, binds to the N-terminal domain of the chaperone ClpA.

Involved in the modulation of the specificity of the ClpAP-mediated ATP-dependent protein degradation. This Neisseria gonorrhoeae (strain ATCC 700825 / FA 1090) protein is ATP-dependent Clp protease adapter protein ClpS.